The chain runs to 234 residues: Zein-alpha A30 (234 aa).

Positions 1–21 (MAAKIFCLLMLLGLSASAATA) are cleaved as a signal peptide.

It belongs to the zein family.

Its function is as follows. Zeins are major seed storage proteins. This chain is Zein-alpha A30, found in Zea mays (Maize).